Consider the following 309-residue polypeptide: Protease HtpX homolog (309 aa).

Transmembrane regions (helical) follow at residues 7 to 27 and 28 to 48; these read AILLAGLTALFMGVGYLIGGA and SGAMIALVVAAATNIFAYWNS. His-130 provides a ligand contact to Zn(2+). Residue Glu-131 is part of the active site. His-134 is a Zn(2+) binding site. Transmembrane regions (helical) follow at residues 145-165 and 173-193; these read VTATIAGAVSMLAQFGMFFGG and GLGVIGSIAMMILAPIAAMLV. A Zn(2+)-binding site is contributed by Glu-202.

This sequence belongs to the peptidase M48B family. Requires Zn(2+) as cofactor.

Its subcellular location is the cell inner membrane. This chain is Protease HtpX homolog, found in Rhodopseudomonas palustris (strain BisA53).